The chain runs to 325 residues: Heat-inducible transcription repressor HrcA (325 aa).

It belongs to the HrcA family.

In terms of biological role, negative regulator of class I heat shock genes (grpE-dnaK-dnaJ and groELS operons). Prevents heat-shock induction of these operons. The protein is Heat-inducible transcription repressor HrcA of Staphylococcus aureus (strain USA300).